The following is a 1015-amino-acid chain: SKI family transcriptional corepressor 2 (1015 aa).

Disordered regions lie at residues 280 to 316 (HLLG…DDDD) and 518 to 934 (GAAG…KKDV). A compositionally biased stretch (pro residues) spans 284–295 (APPPPPPPPPPL). A compositionally biased stretch (low complexity) spans 575–600 (PPADSVAAAGAGAAAAGSGPAGSRVP). Residues 628-637 (GGKDDAESLA) show a composition bias toward basic and acidic residues. Basic residues predominate over residues 653 to 669 (HPHHHHHPHHHHHHHHP). Composition is skewed to pro residues over residues 670–684 (PQPP…PQPD) and 694–708 (APPP…PPLA). 2 stretches are compositionally biased toward acidic residues: residues 730–745 (DSSE…QEVD) and 754–774 (GEEE…EETE). Residues 793–803 (PSEKGSSRDRA) are compositionally biased toward basic and acidic residues. Positions 832–842 (DLPPPPPPPLA) are enriched in pro residues. Basic and acidic residues-rich tracts occupy residues 861–877 (PSLE…KTKE), 885–899 (TKDD…KEHS), and 912–922 (FWRERSGEHTQ).

It belongs to the SKI family. Interacts with SMAD2 and SMAD3. Expressed in cerebellum, spinal cord and testis. Isoform 2 is present in cerebellum (at protein level).

It localises to the nucleus. Its subcellular location is the cytoplasm. Functionally, exhibits transcriptional repressor activity. Acts as a TGF-beta antagonist in the nervous system. This is SKI family transcriptional corepressor 2 from Homo sapiens (Human).